The primary structure comprises 338 residues: Glycerol-3-phosphate dehydrogenase [NAD(P)+] (338 aa).

3 residues coordinate NADPH: W11, R30, and K109. Sn-glycerol 3-phosphate is bound by residues K109, G143, and S145. A147 is a binding site for NADPH. Sn-glycerol 3-phosphate is bound by residues K198, D251, S261, R262, and N263. The active-site Proton acceptor is K198. R262 lines the NADPH pocket. The NADPH site is built by V286 and E288.

It belongs to the NAD-dependent glycerol-3-phosphate dehydrogenase family.

Its subcellular location is the cytoplasm. The enzyme catalyses sn-glycerol 3-phosphate + NAD(+) = dihydroxyacetone phosphate + NADH + H(+). It carries out the reaction sn-glycerol 3-phosphate + NADP(+) = dihydroxyacetone phosphate + NADPH + H(+). Its pathway is membrane lipid metabolism; glycerophospholipid metabolism. Functionally, catalyzes the reduction of the glycolytic intermediate dihydroxyacetone phosphate (DHAP) to sn-glycerol 3-phosphate (G3P), the key precursor for phospholipid synthesis. The chain is Glycerol-3-phosphate dehydrogenase [NAD(P)+] from Cupriavidus taiwanensis (strain DSM 17343 / BCRC 17206 / CCUG 44338 / CIP 107171 / LMG 19424 / R1) (Ralstonia taiwanensis (strain LMG 19424)).